A 324-amino-acid chain; its full sequence is dITP/XTP pyrophosphatase (324 aa).

Residues M1–V126 form a unknown region. The tract at residues L127–Q324 is NTP pyrophosphatase. T131–K136 is a substrate binding site. Residue D193 is the Proton acceptor of the active site. D193 serves as a coordination point for Mg(2+). Substrate-binding positions include S194, F277–D280, K300, and H305–R306.

It belongs to the HAM1 NTPase family. As to quaternary structure, homodimer. Requires Mg(2+) as cofactor.

It catalyses the reaction XTP + H2O = XMP + diphosphate + H(+). The enzyme catalyses dITP + H2O = dIMP + diphosphate + H(+). It carries out the reaction ITP + H2O = IMP + diphosphate + H(+). Functionally, pyrophosphatase that catalyzes the hydrolysis of nucleoside triphosphates to their monophosphate derivatives, with a high preference for the non-canonical purine nucleotides XTP (xanthosine triphosphate), dITP (deoxyinosine triphosphate) and ITP. Seems to function as a house-cleaning enzyme that removes non-canonical purine nucleotides from the nucleotide pool, thus preventing their incorporation into DNA/RNA and avoiding chromosomal lesions. The polypeptide is dITP/XTP pyrophosphatase (Streptococcus thermophilus (strain CNRZ 1066)).